Reading from the N-terminus, the 346-residue chain is Tetraacyldisaccharide 4'-kinase (346 aa).

ATP is bound at residue 54 to 61 (TVGGAGKT).

It belongs to the LpxK family.

The catalysed reaction is a lipid A disaccharide + ATP = a lipid IVA + ADP + H(+). The protein operates within glycolipid biosynthesis; lipid IV(A) biosynthesis; lipid IV(A) from (3R)-3-hydroxytetradecanoyl-[acyl-carrier-protein] and UDP-N-acetyl-alpha-D-glucosamine: step 6/6. In terms of biological role, transfers the gamma-phosphate of ATP to the 4'-position of a tetraacyldisaccharide 1-phosphate intermediate (termed DS-1-P) to form tetraacyldisaccharide 1,4'-bis-phosphate (lipid IVA). The polypeptide is Tetraacyldisaccharide 4'-kinase (Sinorhizobium fredii (strain NBRC 101917 / NGR234)).